We begin with the raw amino-acid sequence, 388 residues long: Alpha-2A adrenergic receptor (388 aa).

The Extracellular portion of the chain corresponds to 1–22 (MICGANATNGTNATKEYTLLVA). 3 N-linked (GlcNAc...) asparagine glycosylation sites follow: Asn6, Asn9, and Asn12. The helical transmembrane segment at 23–48 (LPLSIAVGLLILLIIFGNVLVIIAVF) threads the bilayer. Residues 49–59 (TSRALRAPQNL) lie on the Cytoplasmic side of the membrane. Residues 60 to 85 (FLVSLASADILVATLVMPFSLANELM) form a helical membrane-spanning segment. At 86–95 (GMWTFGGVWC) the chain is on the extracellular side. Cys95 and Cys169 form a disulfide bridge. Residues 96–118 (EIYLALDVLFCTASITHLCAISL) form a helical membrane-spanning segment. At 119-138 (DRYWSITQAIEYNLKRTPQR) the chain is on the cytoplasmic side. The chain crosses the membrane as a helical span at residues 139–162 (IKRIIFIVWIIAAVISCPPLITMK). Over 163–173 (KSEGDICDINK) the chain is Extracellular. A helical transmembrane segment spans residues 174–198 (EKWYIVSSCIGSFFLPCIIMVLVYI). Topologically, residues 199–311 (RIYQIAKKRT…RQNREKRFTF (113 aa)) are cytoplasmic. A disordered region spans residues 208 to 291 (TRAPPGDHRK…PGDGDKTEAC (84 aa)). Over residues 212-231 (PGDHRKNEVGKKENDPHEKL) the composition is skewed to basic and acidic residues. Positions 266-275 (LKKKSSKGKT) are enriched in basic residues. A helical transmembrane segment spans residues 312 to 337 (VLAVVIGVFVICWFPFFFTYTFTAFC). The Extracellular portion of the chain corresponds to 338–344 (DCCVPET). The chain crosses the membrane as a helical span at residues 345–368 (LFKFFFWFGYCNSSLNPIIYTIFN). Over 369–388 (NDFRRSFKKILCRRDKRRVV) the chain is Cytoplasmic. Cys380 carries the S-palmitoyl cysteine lipid modification.

Belongs to the G-protein coupled receptor 1 family. Adrenergic receptor subfamily. ADRA2A sub-subfamily.

It localises to the cell membrane. Its function is as follows. Alpha-2 adrenergic receptors mediate the catecholamine-induced inhibition of adenylate cyclase through the action of G proteins. The order of potency for this receptor is dexmedetomidine &gt; oxymetazoline = epinephrine &gt; norepinephrine. The protein is Alpha-2A adrenergic receptor of Danio rerio (Zebrafish).